The primary structure comprises 355 residues: S-adenosylmethionine:tRNA ribosyltransferase-isomerase (355 aa).

It belongs to the QueA family. In terms of assembly, monomer.

Its subcellular location is the cytoplasm. It catalyses the reaction 7-aminomethyl-7-carbaguanosine(34) in tRNA + S-adenosyl-L-methionine = epoxyqueuosine(34) in tRNA + adenine + L-methionine + 2 H(+). Its pathway is tRNA modification; tRNA-queuosine biosynthesis. Functionally, transfers and isomerizes the ribose moiety from AdoMet to the 7-aminomethyl group of 7-deazaguanine (preQ1-tRNA) to give epoxyqueuosine (oQ-tRNA). In Burkholderia ambifaria (strain ATCC BAA-244 / DSM 16087 / CCUG 44356 / LMG 19182 / AMMD) (Burkholderia cepacia (strain AMMD)), this protein is S-adenosylmethionine:tRNA ribosyltransferase-isomerase.